The following is a 408-amino-acid chain: Argininosuccinate synthase (408 aa).

14–22 (AYSGGLDTS) provides a ligand contact to ATP. L-citrulline is bound by residues Tyr92 and Ser97. Gly122 serves as a coordination point for ATP. Positions 124, 128, and 129 each coordinate L-aspartate. Asn128 provides a ligand contact to L-citrulline. Arg132, Ser181, Ser190, Glu266, and Tyr278 together coordinate L-citrulline.

Belongs to the argininosuccinate synthase family. Type 1 subfamily. In terms of assembly, homotetramer.

The protein localises to the cytoplasm. The catalysed reaction is L-citrulline + L-aspartate + ATP = 2-(N(omega)-L-arginino)succinate + AMP + diphosphate + H(+). The protein operates within amino-acid biosynthesis; L-arginine biosynthesis; L-arginine from L-ornithine and carbamoyl phosphate: step 2/3. In Moorella thermoacetica (strain ATCC 39073 / JCM 9320), this protein is Argininosuccinate synthase.